Here is a 206-residue protein sequence, read N- to C-terminus: Ribosomal RNA large subunit methyltransferase E (206 aa).

5 residues coordinate S-adenosyl-L-methionine: Gly-60, Trp-62, Asp-80, Asp-96, and Asp-121. Lys-161 acts as the Proton acceptor in catalysis.

The protein belongs to the class I-like SAM-binding methyltransferase superfamily. RNA methyltransferase RlmE family.

The protein resides in the cytoplasm. It catalyses the reaction uridine(2552) in 23S rRNA + S-adenosyl-L-methionine = 2'-O-methyluridine(2552) in 23S rRNA + S-adenosyl-L-homocysteine + H(+). Its function is as follows. Specifically methylates the uridine in position 2552 of 23S rRNA at the 2'-O position of the ribose in the fully assembled 50S ribosomal subunit. This chain is Ribosomal RNA large subunit methyltransferase E, found in Francisella tularensis subsp. novicida (strain U112).